Here is a 481-residue protein sequence, read N- to C-terminus: Extracellular exo-alpha-(1-&gt;5)-L-arabinofuranosidase (481 aa).

The N-terminal stretch at 1 to 27 (MRRLTVRLFTAVLAALALLTMGTPAHA) is a signal peptide. Residues 37 to 336 (FTNPLAEKRA…KVYWNADGTP (300 aa)) form a catalytic region. The Proton acceptor role is filled by Asp-47. Asn-186 is a binding site for substrate. Glu-223 serves as the catalytic Proton donor. Substrate is bound by residues His-287, Arg-321, 363 to 366 (HWDF), Asp-379, 457 to 460 (HYEN), and Asp-475. An ABD region spans residues 349-479 (VRFSSYNYPD…ALDRQDATFY (131 aa)).

This sequence belongs to the glycosyl hydrolase 43 family.

The protein localises to the secreted. The catalysed reaction is Hydrolysis of terminal non-reducing alpha-L-arabinofuranoside residues in alpha-L-arabinosides.. Its pathway is glycan metabolism; L-arabinan degradation. Its function is as follows. Involved in the degradation of arabinan and is a key enzyme in the complete degradation of the plant cell wall. Catalyzes only the cleavage of terminal alpha-(1-&gt;5) arabinofuranosyl bonds of arabinan present in the arabinofuranosyl polysaccharides or oligosaccharides. It cannot act on other arabinose-containing polysaccharides and arabinoxylo-oligosaccharides. In Streptomyces avermitilis (strain ATCC 31267 / DSM 46492 / JCM 5070 / NBRC 14893 / NCIMB 12804 / NRRL 8165 / MA-4680), this protein is Extracellular exo-alpha-(1-&gt;5)-L-arabinofuranosidase.